The following is a 382-amino-acid chain: uncharacterized protein (382 aa).

The next 12 membrane-spanning stretches (helical) occupy residues 14–34, 45–65, 75–95, 102–122, 131–151, 157–177, 204–224, 235–255, 265–284, 289–311, 325–345, and 349–369; these read GLLL…LWLA, MVSS…GYLI, YLAS…VGFW, FIAG…LMCS, LLAA…LLVS, LLHV…PLLF, LGVN…GLMP, ASIG…QWPV, LLVL…VMLT, APAL…AWAC, ALLL…AMLM, and SDNL…LMLL.

Belongs to the major facilitator superfamily. YcaD (TC 2.A.1.26) family.

Its subcellular location is the cell inner membrane. This is an uncharacterized protein from Salmonella arizonae (strain ATCC BAA-731 / CDC346-86 / RSK2980).